A 552-amino-acid chain; its full sequence is MERFLRKYNISGDYANATRTFLAISPQWTCSHLKRNCLFNGMCVKQHFERAMIAATDAEEPAKAYKLVELAKEAMYDRETVWLQCFKSFSQPYEEDVEGKMKRCGAQLLEDYRKSGMMDEAVKQSALVNSERIRLDDSLSAMPYIYVPINNGQIVNPTFISRYRQIAYYFYNPDAADDWIDPNLFGIRGQHNQIKREVERQINTCPYTGYRGRVFQVMFLPIQLINFLRMDDFAKHFNRYASMAIQQYLRVGYAEEIRYVQQLFGKVPTGEFPLHQMMLMRRDLPTRDRSIVEARVRRSGDENWQSWLLPMIIIREGLDHQDRWEWFIDYMDRKHTCQLCYLKHSKQIPACSVIDVRASELTGCSPFKMVKIEEHVGNDSVFKTKLVRDEQIGRIGDHYYTTNCYTGAEALITTAIHIHRWIRGSGIWNDEGWQEGIFMLGRVLLRWELTKAQRSALLRLFCFVCYGYAPRADGTIPDWNNLGNFLDIILKGPELSEDEDERAYATMFEMVRCIITLCYAEKVHFAGFAAPACEGGEVINLAARMSQMWMEY.

The protein belongs to the orbivirus non-structural protein NS1 family.

This Bluetongue virus 13 (isolate USA) (BTV 13) protein is Non-structural protein NS1 (Segment-5).